The sequence spans 305 residues: MTARALWLLCLIVGWSPEAPVAERKAPPPHRKPDSRETPGPRAQPLPEFSRRPRAAYAGPRAWPDPRRRKTAPPADNRAGFRDAVHAPAALPGPRLAQAENRASPPEDSPRRALSRAVRPPGARAASPAHPNRPRAAAQPSGTPQALSPEDREPETQSCARACSADADEWEAYCASEFAVNGIVHDVDVLGAGMRLVTLLVDPDGLYKMSRLYITPDGFFFRVHILALDSSSCHKPCPEFKPGSRYIVMGHIYHKRRQLPSALLQVLRGRLRPGDGLIRGSSSYVKRFNRKREWQVRGATHTQCI.

Positions methionine 1–alanine 22 are cleaved as a signal peptide. The interval glutamate 18 to alanine 160 is disordered. Residues valine 21–proline 39 show a composition bias toward basic and acidic residues. Disulfide bonds link cysteine 159–cysteine 233, cysteine 163–cysteine 237, and cysteine 174–cysteine 304. In terms of domain architecture, NTR spans cysteine 159 to cysteine 304.

It belongs to the UPF0450 family.

This chain is UPF0450 protein C17orf58 homolog, found in Mus musculus (Mouse).